Here is a 260-residue protein sequence, read N- to C-terminus: BTB/POZ domain-containing protein KCTD21 (260 aa).

Residues 3 to 72 (DPITLNVGGK…LRTSHLDLPE (70 aa)) form the BTB domain. The stretch at 88 to 112 (QVQPLIEALQEKEVELSKAEKNAML) forms a coiled coil.

In terms of assembly, homopentamer. Interacts with KCTD11; KCTD21 and KCTD11 may associate in pentameric assemblies. Interacts (via BTB domain) with CUL3; indicative for a participation in a BCR (BTB-CUL3-RBX1) E3 ubiquitin-protein ligase complex. Highly expressed in cerebellum and brain. Expression is down-regulated in medulloblastoma.

It functions in the pathway protein modification; protein ubiquitination. Its function is as follows. Probable substrate-specific adapter of a BCR (BTB-CUL3-RBX1) E3 ubiquitin-protein ligase complex mediating the ubiquitination and subsequent proteasomal degradation of target proteins. Promotes the ubiquitination of HDAC1. Can function as antagonist of the Hedgehog pathway by affecting the nuclear transfer of transcription factor GLI1; the function probably occurs via HDAC1 down-regulation, keeping GLI1 acetylated and inactive. Inhibits cell growth and tumorigenicity of medulloblastoma (MDB). This is BTB/POZ domain-containing protein KCTD21 (KCTD21) from Homo sapiens (Human).